The following is a 284-amino-acid chain: 4-diphosphocytidyl-2-C-methyl-D-erythritol kinase (284 aa).

Lysine 14 is an active-site residue. 98–108 is an ATP binding site; that stretch reads PMGGGLGGGSS. Residue aspartate 140 is part of the active site.

It belongs to the GHMP kinase family. IspE subfamily.

The enzyme catalyses 4-CDP-2-C-methyl-D-erythritol + ATP = 4-CDP-2-C-methyl-D-erythritol 2-phosphate + ADP + H(+). It participates in isoprenoid biosynthesis; isopentenyl diphosphate biosynthesis via DXP pathway; isopentenyl diphosphate from 1-deoxy-D-xylulose 5-phosphate: step 3/6. Functionally, catalyzes the phosphorylation of the position 2 hydroxy group of 4-diphosphocytidyl-2C-methyl-D-erythritol. The polypeptide is 4-diphosphocytidyl-2-C-methyl-D-erythritol kinase (Shewanella halifaxensis (strain HAW-EB4)).